Here is a 97-residue protein sequence, read N- to C-terminus: MKIRPLHDRVIVKRKEVESKSSGGIVLTGSAAGKSTRGEVLAVGHGRVLENGGIKALDVRVGDTIIFNDGYGVKVEKIDNEEVLIMSENDILAIVEK.

It belongs to the GroES chaperonin family. As to quaternary structure, heptamer of 7 subunits arranged in a ring. Interacts with the chaperonin GroEL.

The protein resides in the cytoplasm. Its function is as follows. Together with the chaperonin GroEL, plays an essential role in assisting protein folding. The GroEL-GroES system forms a nano-cage that allows encapsulation of the non-native substrate proteins and provides a physical environment optimized to promote and accelerate protein folding. GroES binds to the apical surface of the GroEL ring, thereby capping the opening of the GroEL channel. The sequence is that of Co-chaperonin GroES from Blochmanniella floridana.